The following is a 627-amino-acid chain: DNA mismatch repair protein MutL (627 aa).

Residues 354–364 (DEKPPEKKVPE) are compositionally biased toward basic and acidic residues. The tract at residues 354–374 (DEKPPEKKVPEKSTAPSYSPM) is disordered.

Belongs to the DNA mismatch repair MutL/HexB family.

Functionally, this protein is involved in the repair of mismatches in DNA. It is required for dam-dependent methyl-directed DNA mismatch repair. May act as a 'molecular matchmaker', a protein that promotes the formation of a stable complex between two or more DNA-binding proteins in an ATP-dependent manner without itself being part of a final effector complex. Overexpression of mutSL partially suppresses the high spontaneous mutation frequency of a ytkD/mutM/mutY triple disruption which lacks the system required to prevent damage by oxidized guanine (8-oxo-dGTP). This suggests that MutSL also functions to repair mismatches due to oxidative stress in both growing and stationary phase cells. The polypeptide is DNA mismatch repair protein MutL (Bacillus subtilis (strain 168)).